The primary structure comprises 93 residues: Small ribosomal subunit protein bS20c (93 aa).

Belongs to the bacterial ribosomal protein bS20 family.

It is found in the plastid. The protein resides in the chloroplast. In terms of biological role, binds directly to 16S ribosomal RNA. The sequence is that of Small ribosomal subunit protein bS20c from Trieres chinensis (Marine centric diatom).